The sequence spans 211 residues: MPHLLHIDSSLAPEGSVSRGVAEAYAESWRKHHPDGTLTHRDLATSPPPHLNWALVSGGQTPPEQRTPEQAEAVKIREEYLEEVESADEYVISVPMYNYAYPSTIKAWLDQVIVMGRTAGGTAGDGVLAGRKVTVITAQGGSYAPGAPKEGWDHQVPYLRHAFEALGADNIEFITVVMTLSKVNPALAAFTDVFEASRTAAEQTARDRAAA.

FMN is bound by residues serine 10 and 16–18 (SVS).

The protein belongs to the azoreductase type 1 family. As to quaternary structure, homodimer. FMN serves as cofactor.

The enzyme catalyses 2 a quinone + NADH + H(+) = 2 a 1,4-benzosemiquinone + NAD(+). It carries out the reaction N,N-dimethyl-1,4-phenylenediamine + anthranilate + 2 NAD(+) = 2-(4-dimethylaminophenyl)diazenylbenzoate + 2 NADH + 2 H(+). Its function is as follows. Quinone reductase that provides resistance to thiol-specific stress caused by electrophilic quinones. Also exhibits azoreductase activity. Catalyzes the reductive cleavage of the azo bond in aromatic azo compounds to the corresponding amines. This Parafrankia sp. (strain EAN1pec) protein is FMN-dependent NADH:quinone oxidoreductase.